We begin with the raw amino-acid sequence, 344 residues long: Phosphoribosylformylglycinamidine cyclo-ligase (344 aa).

It belongs to the AIR synthase family.

The protein resides in the cytoplasm. It carries out the reaction 2-formamido-N(1)-(5-O-phospho-beta-D-ribosyl)acetamidine + ATP = 5-amino-1-(5-phospho-beta-D-ribosyl)imidazole + ADP + phosphate + H(+). Its pathway is purine metabolism; IMP biosynthesis via de novo pathway; 5-amino-1-(5-phospho-D-ribosyl)imidazole from N(2)-formyl-N(1)-(5-phospho-D-ribosyl)glycinamide: step 2/2. This Haemophilus influenzae (strain 86-028NP) protein is Phosphoribosylformylglycinamidine cyclo-ligase.